Reading from the N-terminus, the 90-residue chain is UPF0237 protein NMB1653 (90 aa).

An ACT domain is found at 5–83 (VITVIGKDRV…LDIRMQNEEI (79 aa)).

Belongs to the UPF0237 family.

The sequence is that of UPF0237 protein NMB1653 from Neisseria meningitidis serogroup B (strain ATCC BAA-335 / MC58).